Reading from the N-terminus, the 113-residue chain is Single-stranded DNA-binding protein B (113 aa).

The SSB domain occupies 1 to 104; sequence MFNQVMLVGR…VLADTVRFMD (104 aa). Tyrosine 82 bears the Phosphotyrosine mark.

As to quaternary structure, homotetramer. In terms of processing, phosphorylated by YwqD, which increases ssDNA affinity; dephosphorylated by YwqE.

The protein localises to the cytoplasm. Functionally, not essential for replication of the chromosome, but is required for optimal competence. Binds ssDNA, binding is facilitated by DprA, acts as an accessory factor for homologous DNA strand exchange. This is Single-stranded DNA-binding protein B (ssbB) from Bacillus subtilis (strain 168).